We begin with the raw amino-acid sequence, 861 residues long: Protein argonaute-3 (861 aa).

Position 1 is an N-acetylmethionine (methionine 1). The PAZ domain maps to 230 to 349 (PVIQFMCEVL…LPLEVCNIVA (120 aa)). The Piwi domain maps to 518–820 (LIIVILPGKT…VAFRARYHLV (303 aa)). Residues 530-567 (YAEVKRVGDTLLGMATQCVQVKNVIKTSPQTLSNLCLK) are interaction with guide RNA. Aspartate 598, glutamate 638, and aspartate 670 together coordinate a divalent metal cation. The interval 758–806 (QGTSRPSHYHVLWDDNCFTADELQLLTYQPSAHTYVHCTRSVSIPAPAY) is interaction with guide RNA. Histidine 809 serves as a coordination point for a divalent metal cation. Positions 824–847 (RDSAEGSHVSGQSNGRDPQALAKA) are disordered. Serine 826 carries the phosphoserine modification.

It belongs to the argonaute family. Ago subfamily. As to quaternary structure, interacts with EIF4B, IMP8, PRMT5 and TNRC6B. Interacts with APOBEC3F, APOBEC3G and APOBEC3H. Interacts with EDC4. Ubiquitinated on surface-exposed lysines by a SCF-like E3 ubiquitin-protein ligase complex containing ZSWIM8 during target-directed microRNA degradation (TDMD), a process that mediates degradation of microRNAs (miRNAs). Ubiquitination by the SCF-like E3 ubiquitin-protein ligase complex containing ZSWIM8 leads to its subsequent degradation, thereby exposing miRNAs for degradation. ZSWIM8 recognizes and binds AGO3 when it is engaged with a TDMD target.

The protein resides in the cytoplasm. The protein localises to the P-body. The catalysed reaction is Endonucleolytic cleavage to 5'-phosphomonoester.. Its function is as follows. Required for RNA-mediated gene silencing (RNAi). Binds to short RNAs such as microRNAs (miRNAs) and represses the translation of mRNAs which are complementary to them. Proposed to be involved in stabilization of small RNA derivates (siRNA) derived from processed RNA polymerase III-transcribed Alu repeats containing a DR2 retinoic acid response element (RARE) in stem cells and in the subsequent siRNA-dependent degradation of a subset of RNA polymerase II-transcribed coding mRNAs by recruiting a mRNA decapping complex involving EDC4. Possesses RNA slicer activity but only on select RNAs bearing 5'- and 3'-flanking sequences to the region of guide-target complementarity. In Bos taurus (Bovine), this protein is Protein argonaute-3 (AGO3).